We begin with the raw amino-acid sequence, 382 residues long: Lipid-A-disaccharide synthase (382 aa).

It belongs to the LpxB family.

The enzyme catalyses 2-N,3-O-bis[(3R)-3-hydroxytetradecanoyl]-alpha-D-glucosaminyl 1-phosphate + UDP-2-N,3-O-bis[(3R)-3-hydroxytetradecanoyl]-alpha-D-glucosamine = lipid A disaccharide (E. coli) + UDP + H(+). It catalyses the reaction a lipid X + a UDP-2-N,3-O-bis[(3R)-3-hydroxyacyl]-alpha-D-glucosamine = a lipid A disaccharide + UDP + H(+). It functions in the pathway glycolipid biosynthesis; lipid IV(A) biosynthesis; lipid IV(A) from (3R)-3-hydroxytetradecanoyl-[acyl-carrier-protein] and UDP-N-acetyl-alpha-D-glucosamine: step 5/6. In terms of biological role, condensation of UDP-2,3-diacylglucosamine and 2,3-diacylglucosamine-1-phosphate to form lipid A disaccharide, a precursor of lipid A, a phosphorylated glycolipid that anchors the lipopolysaccharide to the outer membrane of the cell. This chain is Lipid-A-disaccharide synthase, found in Salmonella heidelberg (strain SL476).